Here is a 759-residue protein sequence, read N- to C-terminus: DNA topoisomerase 3 (759 aa).

Residues 3–147 form the Toprim domain; the sequence is RALFVAEKND…RLDIFRARFS (145 aa). In terms of domain architecture, Topo IA-type catalytic spans 165–590; sequence DEKTVAAVDC…EQIGKYRAIF (426 aa). The O-(5'-phospho-DNA)-tyrosine intermediate role is filled by Tyr334. The interval 609-715 is disordered; it reads DKNNQAGGGP…KEQEEEEEVF (107 aa). A compositionally biased stretch (gly residues) spans 614–639; the sequence is AGGGPGGPGGGGGPPRGPGGGGGGGP. A compositionally biased stretch (pro residues) spans 640 to 649; the sequence is TGPPAPPKPP. Zn(2+) contacts are provided by Cys716, Cys718, Cys743, and Cys753. A GRF-type zinc finger spans residues 716–759; it reads CQCPEPMRAVTKVVQKEGPNKGKKFYTCSLPYTSSEKCNFFKWA.

This sequence belongs to the type IA topoisomerase family. As to quaternary structure, component of the BTR double Holliday Junction dissolution complex composed of at least him-6, top-3, rmh-1 and rmif-2, which is involved in double strand break repair in the germline. May interact with rmh-1.

It localises to the nucleus. The catalysed reaction is ATP-independent breakage of single-stranded DNA, followed by passage and rejoining.. Component of the BTR double Holliday Junction dissolution complex, which is involved in homologous recombination during meiotic double strand break in the germline. Releases the supercoiling and torsional tension of DNA introduced during the DNA replication and transcription by transiently cleaving and rejoining one strand of the DNA duplex. Introduces a single-strand break via transesterification at a target site in duplex DNA. The scissile phosphodiester is attacked by the catalytic tyrosine of the enzyme, resulting in the formation of a DNA-(5'-phosphotyrosyl)-enzyme intermediate and the expulsion of a 3'-OH DNA strand. The free DNA strand than undergoes passage around the unbroken strand thus removing DNA supercoils. Finally, in the religation step, the DNA 3'-OH attacks the covalent intermediate to expel the active-site tyrosine and restore the DNA phosphodiester backbone. The protein is DNA topoisomerase 3 of Caenorhabditis elegans.